Consider the following 635-residue polypeptide: ATP-dependent zinc metalloprotease FtsH (635 aa).

Topologically, residues 1–4 are cytoplasmic; it reads MVKN. The helical transmembrane segment at 5–25 threads the bilayer; that stretch reads LVLWVVVAVIMMTAYQSFNSS. Residues 26 to 97 lie on the Periplasmic side of the membrane; that stretch reads SVENSTDYTT…VEGTPFERRG (72 aa). The helical transmembrane segment at 98-118 threads the bilayer; sequence FLSQILISWFPMLFLVGVWVF. The Cytoplasmic portion of the chain corresponds to 119-635; that stretch reads FMRQMQGGGG…AVENTDDFNV (517 aa). 191–198 provides a ligand contact to ATP; that stretch reads GPPGTGKT. Histidine 413 is a binding site for Zn(2+). Residue glutamate 414 is part of the active site. 2 residues coordinate Zn(2+): histidine 417 and aspartate 491. The disordered stretch occupies residues 593-635; sequence NREPVTPPSGWGEPKTQQAAYANSTTNDTKPESAVENTDDFNV. A compositionally biased stretch (polar residues) spans 607-620; that stretch reads KTQQAAYANSTTND.

In the central section; belongs to the AAA ATPase family. The protein in the C-terminal section; belongs to the peptidase M41 family. Homohexamer. The cofactor is Zn(2+).

The protein localises to the cell inner membrane. Acts as a processive, ATP-dependent zinc metallopeptidase for both cytoplasmic and membrane proteins. Plays a role in the quality control of integral membrane proteins. This chain is ATP-dependent zinc metalloprotease FtsH, found in Haemophilus influenzae (strain ATCC 51907 / DSM 11121 / KW20 / Rd).